A 213-amino-acid chain; its full sequence is Nucleoside triphosphate pyrophosphatase (213 aa).

Asp-79 serves as the catalytic Proton acceptor.

This sequence belongs to the Maf family. A divalent metal cation is required as a cofactor.

It is found in the cytoplasm. It carries out the reaction a ribonucleoside 5'-triphosphate + H2O = a ribonucleoside 5'-phosphate + diphosphate + H(+). The catalysed reaction is a 2'-deoxyribonucleoside 5'-triphosphate + H2O = a 2'-deoxyribonucleoside 5'-phosphate + diphosphate + H(+). Its function is as follows. Nucleoside triphosphate pyrophosphatase. May have a dual role in cell division arrest and in preventing the incorporation of modified nucleotides into cellular nucleic acids. In Mycobacterium leprae (strain Br4923), this protein is Nucleoside triphosphate pyrophosphatase.